A 460-amino-acid polypeptide reads, in one-letter code: Ammonium transporter Rh type B-A (460 aa).

Residues 1–10 lie on the Cytoplasmic side of the membrane; sequence MTGYSTNMRI. Residues 11–31 form a helical membrane-spanning segment; it reads KLPLFCLILQFITIILFAVFV. At 32 to 62 the chain is on the extracellular side; the sequence is RYDHESDARGWHDELKNHSTANADNDFYFRY. N-linked (GlcNAc...) asparagine glycosylation is present at Asn-48. A helical transmembrane segment spans residues 63 to 83; it reads PSFQDVHVMIFIGFGFLMTFL. The Cytoplasmic portion of the chain corresponds to 84–87; the sequence is KRYG. A helical membrane pass occupies residues 88–108; that stretch reads FSSVAFNFLIAAFGLQWSTLI. The Extracellular segment spans residues 109–125; sequence QGFFHGFHDGKIHVGIE. Residues 126 to 146 traverse the membrane as a helical segment; it reads SMINADFCTGAVLISFGAVLG. The Cytoplasmic portion of the chain corresponds to 147–150; sequence KTSP. A helical membrane pass occupies residues 151–171; that stretch reads VQLIVMTLIEVTLFGINEYII. Topologically, residues 172-179 are extracellular; that stretch reads LNIVGAKD. The helical transmembrane segment at 180–202 threads the bilayer; sequence AGGSMTIHTFGAYFGLIVSRVLY. The Cytoplasmic segment spans residues 203–220; that stretch reads RADLDKSRQREGSVYHSD. The chain crosses the membrane as a helical span at residues 221 to 241; sequence LFAMIGTIYLWMFWPSFNSAV. Residues 242–252 are Extracellular-facing; the sequence is TAHGDDQHRTV. A helical transmembrane segment spans residues 253–273; the sequence is LNTYYSLAACTLATFGFSALL. Residues 274–283 are Cytoplasmic-facing; sequence NGEGKLDMVH. The chain crosses the membrane as a helical span at residues 284–304; that stretch reads IQNAALAGGVAVGTSGEMMLT. Pro-305 is a topological domain (extracellular). A helical transmembrane segment spans residues 306-326; sequence FGAMIAGTLAGIVSVLGYKYL. Topologically, residues 327–347 are cytoplasmic; that stretch reads TPVLDSKLKIQDTCGVHNLHG. The chain crosses the membrane as a helical span at residues 348-368; that stretch reads MPGILGAVIGAIVALFATADI. The Extracellular portion of the chain corresponds to 369–394; the sequence is YGDGMDDVFPMIFDGSRTAKQQSLYQ. A helical membrane pass occupies residues 395 to 415; that stretch reads FLALLVALGFAIVGGTVVGFI. The Cytoplasmic portion of the chain corresponds to 416-460; it reads LKLPLFGTPSDAECFEDAVYWEVPGGEGHQQLTVVVNNEDPDTQA.

The protein belongs to the ammonium transporter (TC 2.A.49) family. Rh subfamily.

The protein resides in the basolateral cell membrane. It is found in the cytoplasmic vesicle membrane. Its function is as follows. Functions as a specific ammonium transporter. The polypeptide is Ammonium transporter Rh type B-A (rhbg-a) (Xenopus laevis (African clawed frog)).